The sequence spans 1717 residues: PH domain leucine-rich repeat-containing protein phosphatase 1 (1717 aa).

M1 carries the N-acetylmethionine modification. Disordered stretches follow at residues 1–25 (MEPA…SAPA), 41–118 (LAAA…GANS), 136–156 (AASS…GAAG), and 252–470 (PGAA…PPPT). The span at 98–110 (APQPIAGGAAPVP) shows a compositional bias: low complexity. A compositionally biased stretch (pro residues) spans 262–274 (EPPPEAGPRLAPP). Composition is skewed to low complexity over residues 313–325 (SRRA…DSSP) and 333–345 (PVSS…PVVS). S317 is modified (phosphoserine). Polar residues-rich tracts occupy residues 346-358 (DTES…SAES) and 408-417 (QTASSPQPQQ). Position 412 is a phosphoserine (S412). Positions 536–636 (RIQLSGMYNV…WLRQVSKVAS (101 aa)) constitute a PH domain. 21 LRR repeats span residues 638–659 (RISS…LFYS), 661–682 (DLTH…PAAR), 692–712 (KLKS…AVCS), 715–736 (TLAE…VGVM), 738–760 (NLQT…ENMK), 761–783 (QLSY…EKLT), 784–804 (AVDK…QALR), 808–831 (HIKH…DFLQ), 832–853 (HVTQ…IFNN), 873–894 (FLKA…PVPN), 895–916 (YLSY…VCES), 918–939 (KLEV…LFCN), 941–962 (SLRK…LERT), 963–984 (SVEV…LLMK), 987–1008 (SLRF…TLSE), 1013–1033 (ILQE…PLLT), 1037–1058 (HLKI…KMAK), 1061–1082 (ELEE…IMNC), 1084–1105 (RMHT…MQLP), 1106–1127 (EIKC…ENLP), and 1129–1150 (KLQE…TLEL). The interval 1076–1205 (PTTIMNCRRM…NNFCDNREAL (130 aa)) is interaction with NHERF1. Residues 1175–1422 (SHGYTEASGV…DSISAVVVQL (248 aa)) form the PPM-type phosphatase domain. 4 residues coordinate Mn(2+): D1210, G1211, K1374, and D1413. Disordered regions lie at residues 1458–1510 (DRPS…SPAY) and 1673–1717 (EVKE…DTPL). The segment covering 1468–1489 (SSSSGMASEISSELSTSEMSSE) has biased composition (low complexity). Positions 1715 to 1717 (TPL) match the PDZ-binding; required for interaction with NHERF1 motif.

In terms of assembly, interacts with the nucleotide free form of K-Ras (KRAS) via its LRR repeats. Interacts with AKT2, AKT3, PRKCB isoform beta-II, STK4, RPS6KB1, RAF1. Isoform 1 (predominantly) and isoform 2 interact with BRAP. Interacts with FKBP5; FKBP5 acts as a scaffold for PHLPP1 and Akt. Interacts with SCRIB; SCRIB acts as a scaffold for PHLPP1 and Akt. Interacts with NHERF1; NHERF1 scaffolds a heterotrimeric complex with PTEN at the plasma membrane. Interacts with WDR48 and USP12. It depends on Mn(2+) as a cofactor. In colorectal cancer tissue, expression is highest in the surface epithelium of normal colonic mucosa adjacent to the cancer tissue but is largely excluded from the crypt bases. Expression is lost or significantly decreased in 78% of tested tumors (at protein level). Ubiquitously expressed in non-cancerous tissues.

It is found in the cytoplasm. The protein resides in the membrane. The protein localises to the nucleus. Its subcellular location is the cell membrane. It catalyses the reaction O-phospho-L-seryl-[protein] + H2O = L-seryl-[protein] + phosphate. The enzyme catalyses O-phospho-L-threonyl-[protein] + H2O = L-threonyl-[protein] + phosphate. With respect to regulation, insensitive to okadaic acid. Deubiquitination by WDR48-USP12 complex positively regulates PHLPP1 stability. Its function is as follows. Protein phosphatase involved in regulation of Akt and PKC signaling. Mediates dephosphorylation in the C-terminal domain hydrophobic motif of members of the AGC Ser/Thr protein kinase family; specifically acts on 'Ser-473' of AKT2 and AKT3, 'Ser-660' of PRKCB and 'Ser-657' of PRKCA. Isoform 2 seems to have a major role in regulating Akt signaling in hippocampal neurons. Akt regulates the balance between cell survival and apoptosis through a cascade that primarily alters the function of transcription factors that regulate pro- and antiapoptotic genes. Dephosphorylation of 'Ser-473' of Akt triggers apoptosis and suppression of tumor growth. Dephosphorylation of PRKCA and PRKCB leads to their destabilization and degradation. Dephosphorylates STK4 on 'Thr-387' leading to STK4 activation and apoptosis. Dephosphorylates RPS6KB1 and is involved in regulation of cap-dependent translation. Inhibits cancer cell proliferation and may act as a tumor suppressor. Dephosphorylates RAF1 inhibiting its kinase activity. May act as a negative regulator of K-Ras signaling in membrane rafts. Involved in the hippocampus-dependent long-term memory formation. Involved in circadian control by regulating the consolidation of circadian periodicity after resetting. Involved in development and function of regulatory T-cells. This chain is PH domain leucine-rich repeat-containing protein phosphatase 1 (PHLPP1), found in Homo sapiens (Human).